Consider the following 1363-residue polypeptide: Vascular endothelial growth factor receptor 3 (1363 aa).

A signal peptide spans 1–24 (MQPGAALNLRLWLCLGLLQGLANG). At 25–775 (YSMTPPTLNI…EGSEDKGSME (751 aa)) the chain is on the extracellular side. 6 N-linked (GlcNAc...) asparagine glycosylation sites follow: asparagine 33, asparagine 104, asparagine 166, asparagine 251, asparagine 299, and asparagine 411. 7 consecutive Ig-like C2-type domains span residues 44–118 (GDSL…YIKA), 151–213 (KDSM…WGDQ), 230–326 (YDIQ…TEVI), 331–415 (PFIS…ISLE), 422–552 (PHIH…FYVT), 555–671 (PDGF…KYLS), and 678–764 (PRLT…ASVA). Intrachain disulfides connect cysteine 51–cysteine 111 and cysteine 158–cysteine 206. An intrachain disulfide couples cysteine 252 to cysteine 310. Intrachain disulfides connect cysteine 445/cysteine 534, cysteine 466/cysteine 486, and cysteine 578/cysteine 653. N-linked (GlcNAc...) asparagine glycans are attached at residues asparagine 515, asparagine 527, asparagine 582, asparagine 594, asparagine 683, and asparagine 690. A disulfide bridge connects residues cysteine 699 and cysteine 751. N-linked (GlcNAc...) asparagine glycosylation is present at asparagine 758. A helical membrane pass occupies residues 776–796 (IVILIGTGVIAVFFWVLLLLI). Residues 797-1363 (FCNMKRPAHA…GSTFFADSSY (567 aa)) are Cytoplasmic-facing. Phosphotyrosine; by SRC occurs at positions 830 and 833. The region spanning 845–1173 (LHLGRVLGHG…DLVEILGDLL (329 aa)) is the Protein kinase domain. Residues 851 to 859 (LGHGAFGKV) and lysine 879 each bind ATP. Aspartate 1037 (proton acceptor) is an active-site residue. Tyrosine 1063 carries the post-translational modification Phosphotyrosine; by autocatalysis and SRC. Residues tyrosine 1068, tyrosine 1230, tyrosine 1231, and tyrosine 1265 each carry the phosphotyrosine; by autocatalysis modification. The interval 1288–1330 (ESRHRPEGSFSCKGPGQHMDIPRGHPDPQGRRRRPTQGAQGGK) is disordered. The segment covering 1307-1317 (DIPRGHPDPQG) has biased composition (basic and acidic residues). A phosphotyrosine; by autocatalysis and SRC mark is found at tyrosine 1333 and tyrosine 1337. Tyrosine 1363 bears the Phosphotyrosine; by autocatalysis mark.

It belongs to the protein kinase superfamily. Tyr protein kinase family. CSF-1/PDGF receptor subfamily. As to quaternary structure, interacts with VEGFC and VEGFD. Monomer in the absence of bound VEGFC or VEGFD. Homodimer in the presence of bound VEGFC or VEGFD. Can also form a heterodimer with KDR. Interacts with PTPN14; the interaction is enhanced by stimulation with VEGFC. Interacts with CRK, GRB2, PTK2/FAK1, SHC1, PIK3R1 and PTPN11/SHP-2. Identified in a complex with SRC and ITGB1. Autophosphorylated on tyrosine residues upon ligand binding. Autophosphorylation occurs in trans, i.e. one subunit of the dimeric receptor phosphorylates tyrosine residues on the other subunit. Phosphorylation in response to H(2)O(2) is mediated by a process that requires SRC and PRKCD activity. Phosphorylation at Tyr-1068 is required for autophosphorylation at additional tyrosine residues. Phosphorylation at Tyr-1063 and Tyr-1337 is important for interaction with CRK and subsequent activation of MAPK8. Phosphorylation at Tyr-1230, Tyr-1231 and Tyr-1337 is important for interaction with GRB2 and subsequent activation of the AKT1 and MAPK1/ERK2 and/or MAPK3/ERK1 signaling pathways. In response to endothelial cell adhesion onto collagen, can also be phosphorylated in the absence of FLT4 kinase activity by SRC. Expressed in adult lung and liver, and in fetal liver, brain, intestine and placenta.

The protein resides in the cell membrane. The protein localises to the cytoplasm. Its subcellular location is the nucleus. It catalyses the reaction L-tyrosyl-[protein] + ATP = O-phospho-L-tyrosyl-[protein] + ADP + H(+). Present in an inactive conformation in the absence of bound ligand. Binding of VEGFC or VEGFD leads to dimerization and activation by autophosphorylation on tyrosine residues. Functionally, tyrosine-protein kinase that acts as a cell-surface receptor for VEGFC and VEGFD, and plays an essential role in adult lymphangiogenesis and in the development of the vascular network and the cardiovascular system during embryonic development. Promotes proliferation, survival and migration of endothelial cells, and regulates angiogenic sprouting. Signaling by activated FLT4 leads to enhanced production of VEGFC, and to a lesser degree VEGFA, thereby creating a positive feedback loop that enhances FLT4 signaling. Modulates KDR signaling by forming heterodimers. Mediates activation of the MAPK1/ERK2, MAPK3/ERK1 signaling pathway, of MAPK8 and the JUN signaling pathway, and of the AKT1 signaling pathway. Phosphorylates SHC1. Mediates phosphorylation of PIK3R1, the regulatory subunit of phosphatidylinositol 3-kinase. Promotes phosphorylation of MAPK8 at 'Thr-183' and 'Tyr-185', and of AKT1 at 'Ser-473'. This chain is Vascular endothelial growth factor receptor 3 (Flt4), found in Mus musculus (Mouse).